The chain runs to 245 residues: 1-(5-phosphoribosyl)-5-[(5-phosphoribosylamino)methylideneamino] imidazole-4-carboxamide isomerase (245 aa).

Aspartate 8 serves as the catalytic Proton acceptor. Catalysis depends on aspartate 129, which acts as the Proton donor.

This sequence belongs to the HisA/HisF family.

The protein localises to the cytoplasm. It catalyses the reaction 1-(5-phospho-beta-D-ribosyl)-5-[(5-phospho-beta-D-ribosylamino)methylideneamino]imidazole-4-carboxamide = 5-[(5-phospho-1-deoxy-D-ribulos-1-ylimino)methylamino]-1-(5-phospho-beta-D-ribosyl)imidazole-4-carboxamide. Its pathway is amino-acid biosynthesis; L-histidine biosynthesis; L-histidine from 5-phospho-alpha-D-ribose 1-diphosphate: step 4/9. The chain is 1-(5-phosphoribosyl)-5-[(5-phosphoribosylamino)methylideneamino] imidazole-4-carboxamide isomerase from Heliobacterium modesticaldum (strain ATCC 51547 / Ice1).